The following is a 341-amino-acid chain: Ferrochelatase (341 aa).

Fe cation contacts are provided by histidine 189 and glutamate 293.

The protein belongs to the ferrochelatase family.

Its subcellular location is the cytoplasm. The catalysed reaction is heme b + 2 H(+) = protoporphyrin IX + Fe(2+). It functions in the pathway porphyrin-containing compound metabolism; protoheme biosynthesis; protoheme from protoporphyrin-IX: step 1/1. In terms of biological role, catalyzes the ferrous insertion into protoporphyrin IX. The polypeptide is Ferrochelatase (Pseudomonas fluorescens (strain Pf0-1)).